Here is a 304-residue protein sequence, read N- to C-terminus: Mas-related G-protein coupled receptor member A (304 aa).

Topologically, residues 1-17 (MDKTIPGSFNSRTLIPN) are extracellular. The helical transmembrane segment at 18-38 (LLIIISGLVGLIGNAMVFWLL) threads the bilayer. Residues 39–46 (GFRLARNA) lie on the Cytoplasmic side of the membrane. A helical transmembrane segment spans residues 47–67 (FSVYILNLALADFLFLLCHII). Over 68–80 (DSTLLLLKFSYPN) the chain is Extracellular. A helical membrane pass occupies residues 81-101 (IIFLPCFNTVMMVPYIAGLSM). Residues 102 to 132 (LSAISTERCLSVVCPIWYRCRRPKHTSTVMC) are Cytoplasmic-facing. A helical transmembrane segment spans residues 133–153 (SAIWVLSLLICILNRYFCGFL). Topologically, residues 154–167 (DTKYEKDNRCLASN) are extracellular. Residues 168–188 (FFTAACLIFLFVVLCLSSLAL) traverse the membrane as a helical segment. Residues 189-211 (LVRLFCGAGRMKLTRLYATIMLT) lie on the Cytoplasmic side of the membrane. The chain crosses the membrane as a helical span at residues 212 to 232 (VLVFLLCGLPFGIHWFLLIWI). Over 233-244 (KIDYGKFAYGLY) the chain is Extracellular. A helical transmembrane segment spans residues 245-265 (LAALVLTAVNSCANPIIYFFV). The Cytoplasmic portion of the chain corresponds to 266–304 (GSFRHQKHQTLKMVLQRALQDTPETAENTVEMSSSKVEP).

It belongs to the G-protein coupled receptor 1 family. Mas subfamily. In terms of tissue distribution, expressed in a subset of IB4-positive small diameter nociceptive dorsal root neurons.

The protein localises to the cell membrane. Its function is as follows. Orphan receptor activated by a subset of RFamide-family neuropeptides such as FLRF-amide and FMRF-amide. Mediates its action by association with G proteins that activate a phosphatidylinositol-calcium second messenger system. Its effect is mediated by G(q) and G(11) proteins. May regulate the function of nociceptive neurons by modulation of pain perception. The chain is Mas-related G-protein coupled receptor member A (Mrgpra) from Rattus norvegicus (Rat).